The following is a 558-amino-acid chain: MEIILFLTMMVMIAYVFSGYLYRVALVQSSRVDLIFTRFENMCFKIIGTDLEHMSAKTYVKHFLAFNGFMGLITFVLLIVQQWLFLNPNHNLNQSIDLAFNTAISFLTNSNLQHYNGESGVTYLTQMIVMTYLMFTSSASGYAVCIAMLRRLTGLTNIIGNFYQDIVRFIVRVLLPLSCLISILLMTQGVPQTLHANLMIRTLSGHIQHIAFGPIASLESIKHLGTNGGGFLAGNSATPFENPNIWSDFIEMGSMMLLPMSMLFLFGRMLSRHGKRVHRHALILFVAMFFIFIAILTLTMWSEYRGNPILANLGIYGPNMEGKEVRFGAGLSALFTVITTAFTTGSVNNMHDSLTPLGGLGPMVLMMLNVVFGGEGVGLMNLLIYVLLTVFICSLMVGKTPEYLNMPIGAREMKCIVLVFLIHPILILVFSALAFMIPGASESITNPSFHGISQVMYEMTSAAANNGSGFEGLKDDTTFWNISTGIIMLLSRYIPIILQLLIASSLVNKKSYHQDKYTIAIDKPYFGVSLIVFIVLLSGLTFIPVLLLGPIGEFLTLK.

A run of 12 helical transmembrane segments spans residues 1–21 (MEII…SGYL), 66–86 (FNGF…WLFL), 127–147 (MIVM…VCIA), 166–186 (IVRF…ILLM), 245–265 (IWSD…MLFL), 281–301 (ALIL…LTMW), 327–347 (FGAG…TGSV), 354–374 (LTPL…VFGG), 377–397 (VGLM…SLMV), 416–436 (IVLV…LAFM), 482–502 (ISTG…QLLI), and 531–551 (IVFI…LGPI).

This sequence belongs to the KdpA family. In terms of assembly, the system is composed of three essential subunits: KdpA, KdpB and KdpC.

The protein resides in the cell membrane. Functionally, part of the high-affinity ATP-driven potassium transport (or Kdp) system, which catalyzes the hydrolysis of ATP coupled with the electrogenic transport of potassium into the cytoplasm. This subunit binds the extracellular potassium ions and delivers the ions to the membrane domain of KdpB through an intramembrane tunnel. This Staphylococcus aureus (strain bovine RF122 / ET3-1) protein is Potassium-transporting ATPase potassium-binding subunit.